We begin with the raw amino-acid sequence, 332 residues long: Malate dehydrogenase, cytoplasmic (332 aa).

Position 11-17 (11-17 (GAAGQIA)) interacts with NAD(+). 2 residues coordinate substrate: arginine 92 and arginine 98. NAD(+) contacts are provided by residues asparagine 105, glutamine 112, and 129–131 (VGN). Substrate-binding residues include asparagine 131 and arginine 162. Catalysis depends on histidine 187, which acts as the Proton acceptor.

This sequence belongs to the LDH/MDH superfamily. MDH type 2 family. As to quaternary structure, homodimer.

The protein resides in the cytoplasm. The catalysed reaction is (S)-malate + NAD(+) = oxaloacetate + NADH + H(+). This Echinococcus granulosus (Hydatid tapeworm) protein is Malate dehydrogenase, cytoplasmic (MDH).